Here is a 1229-residue protein sequence, read N- to C-terminus: Alpha,alpha-trehalose-phosphate synthase [UDP-forming] 2 (1229 aa).

Residues 196-233 form a disordered region; sequence VSSDSEGEEAIHNVRSGTHTESESEEDPKAPRSGLATS. Residues 213-225 are compositionally biased toward basic and acidic residues; that stretch reads THTESESEEDPKA.

It in the N-terminal section; belongs to the glycosyltransferase 20 family. The protein in the C-terminal section; belongs to the gob-1 trehalose phosphatase family.

The catalysed reaction is D-glucose 6-phosphate + UDP-alpha-D-glucose = alpha,alpha-trehalose 6-phosphate + UDP + H(+). In terms of biological role, catalyzes the production of trehalose from glucose-6-phosphate and UDP-alpha-D-glucose in a 2 step process. The chain is Alpha,alpha-trehalose-phosphate synthase [UDP-forming] 2 (tps-2) from Caenorhabditis elegans.